The sequence spans 490 residues: Adenylosuccinate synthetase 1, chloroplastic (490 aa).

A chloroplast-targeting transit peptide spans 1 to 47 (MSLSTLSHPAAAAAAATGSGKSHFRTAPAAQSVRFPKARPPVPAAVS). The disordered stretch occupies residues 14 to 36 (AAATGSGKSHFRTAPAAQSVRFP). GTP contacts are provided by residues 77–83 (GDEGKGK) and 105–107 (GHT). The Proton acceptor role is filled by Asp-78. Mg(2+) contacts are provided by Asp-78 and Gly-105. IMP-binding positions include 78-81 (DEGK), 103-106 (NAGH), Thr-195, Arg-209, Gln-289, Thr-304, and Arg-368. Residue His-106 is the Proton donor of the active site. 364–370 (TTTGRPR) contributes to the substrate binding site. Residues Arg-370, 396-398 (KLD), and 479-481 (GVG) each bind GTP.

The protein belongs to the adenylosuccinate synthetase family. In terms of assembly, homodimer. Mg(2+) serves as cofactor.

It localises to the plastid. The protein localises to the chloroplast. It carries out the reaction IMP + L-aspartate + GTP = N(6)-(1,2-dicarboxyethyl)-AMP + GDP + phosphate + 2 H(+). Its pathway is purine metabolism; AMP biosynthesis via de novo pathway; AMP from IMP: step 1/2. Functionally, plays an important role in the de novo pathway and in the salvage pathway of purine nucleotide biosynthesis. Catalyzes the first committed step in the biosynthesis of AMP from IMP. This is Adenylosuccinate synthetase 1, chloroplastic from Sorghum bicolor (Sorghum).